Reading from the N-terminus, the 365-residue chain is tRNA/tmRNA (uracil-C(5))-methyltransferase (365 aa).

Residues Gln188, Tyr216, Asn221, Glu237, and Asp297 each coordinate S-adenosyl-L-methionine. Residue Cys322 is the Nucleophile of the active site. The active-site Proton acceptor is Glu356.

It belongs to the class I-like SAM-binding methyltransferase superfamily. RNA M5U methyltransferase family. TrmA subfamily.

It catalyses the reaction uridine(54) in tRNA + S-adenosyl-L-methionine = 5-methyluridine(54) in tRNA + S-adenosyl-L-homocysteine + H(+). The catalysed reaction is uridine(341) in tmRNA + S-adenosyl-L-methionine = 5-methyluridine(341) in tmRNA + S-adenosyl-L-homocysteine + H(+). Functionally, dual-specificity methyltransferase that catalyzes the formation of 5-methyluridine at position 54 (m5U54) in all tRNAs, and that of position 341 (m5U341) in tmRNA (transfer-mRNA). The polypeptide is tRNA/tmRNA (uracil-C(5))-methyltransferase (Aggregatibacter aphrophilus (strain NJ8700) (Haemophilus aphrophilus)).